Consider the following 101-residue polypeptide: MMLEHVLVLGAYLFSIGIYGLITSRNMVRALMCLELILNAVNINLVTFSDFFDSRQLKGDILSIFVIAIAAAEAAIGLAIVSSIYRNRKSTRINQSNLLNK.

3 helical membrane passes run 2–22 (MLEH…YGLI), 32–52 (MCLE…SDFF), and 61–81 (ILSI…LAIV).

The protein belongs to the complex I subunit 4L family. As to quaternary structure, NDH is composed of at least 16 different subunits, 5 of which are encoded in the nucleus.

The protein localises to the plastid. It is found in the chloroplast thylakoid membrane. The enzyme catalyses a plastoquinone + NADH + (n+1) H(+)(in) = a plastoquinol + NAD(+) + n H(+)(out). The catalysed reaction is a plastoquinone + NADPH + (n+1) H(+)(in) = a plastoquinol + NADP(+) + n H(+)(out). Functionally, NDH shuttles electrons from NAD(P)H:plastoquinone, via FMN and iron-sulfur (Fe-S) centers, to quinones in the photosynthetic chain and possibly in a chloroplast respiratory chain. The immediate electron acceptor for the enzyme in this species is believed to be plastoquinone. Couples the redox reaction to proton translocation, and thus conserves the redox energy in a proton gradient. The sequence is that of NAD(P)H-quinone oxidoreductase subunit 4L, chloroplastic from Buxus microphylla (Littleleaf boxwood).